The primary structure comprises 519 residues: Putative cytochrome P450 CYP13A10 (519 aa).

Residues 3–23 (VILLAIPTLFIGFISYYLWIW) traverse the membrane as a helical segment. Position 465 (cysteine 465) interacts with heme.

The protein belongs to the cytochrome P450 family. It depends on heme as a cofactor.

It is found in the membrane. Its function is as follows. Cytochromes P450 are a group of heme-thiolate monooxygenases. They oxidize a variety of structurally unrelated compounds, including steroids, fatty acids, and xenobiotics. The chain is Putative cytochrome P450 CYP13A10 (cyp-13A10) from Caenorhabditis elegans.